Reading from the N-terminus, the 200-residue chain is Imidazoleglycerol-phosphate dehydratase (200 aa).

This sequence belongs to the imidazoleglycerol-phosphate dehydratase family.

The protein localises to the cytoplasm. It catalyses the reaction D-erythro-1-(imidazol-4-yl)glycerol 3-phosphate = 3-(imidazol-4-yl)-2-oxopropyl phosphate + H2O. Its pathway is amino-acid biosynthesis; L-histidine biosynthesis; L-histidine from 5-phospho-alpha-D-ribose 1-diphosphate: step 6/9. This chain is Imidazoleglycerol-phosphate dehydratase, found in Chlorobium luteolum (strain DSM 273 / BCRC 81028 / 2530) (Pelodictyon luteolum).